The primary structure comprises 560 residues: Dihydroxy-acid dehydratase (560 aa).

Positions 1–20 (MGDNLKKRSSMTTDGDNRAP) are disordered. C52 contributes to the [2Fe-2S] cluster binding site. Residue D84 coordinates Mg(2+). C125 provides a ligand contact to [2Fe-2S] cluster. Mg(2+) is bound by residues D126 and K127. Position 127 is an N6-carboxylysine (K127). C197 serves as a coordination point for [2Fe-2S] cluster. Mg(2+) is bound at residue E448. S474 functions as the Proton acceptor in the catalytic mechanism.

This sequence belongs to the IlvD/Edd family. In terms of assembly, homodimer. [2Fe-2S] cluster is required as a cofactor. Requires Mg(2+) as cofactor.

It carries out the reaction (2R)-2,3-dihydroxy-3-methylbutanoate = 3-methyl-2-oxobutanoate + H2O. The catalysed reaction is (2R,3R)-2,3-dihydroxy-3-methylpentanoate = (S)-3-methyl-2-oxopentanoate + H2O. The protein operates within amino-acid biosynthesis; L-isoleucine biosynthesis; L-isoleucine from 2-oxobutanoate: step 3/4. It functions in the pathway amino-acid biosynthesis; L-valine biosynthesis; L-valine from pyruvate: step 3/4. Functions in the biosynthesis of branched-chain amino acids. Catalyzes the dehydration of (2R,3R)-2,3-dihydroxy-3-methylpentanoate (2,3-dihydroxy-3-methylvalerate) into 2-oxo-3-methylpentanoate (2-oxo-3-methylvalerate) and of (2R)-2,3-dihydroxy-3-methylbutanoate (2,3-dihydroxyisovalerate) into 2-oxo-3-methylbutanoate (2-oxoisovalerate), the penultimate precursor to L-isoleucine and L-valine, respectively. This is Dihydroxy-acid dehydratase from Leptospira interrogans serogroup Icterohaemorrhagiae serovar copenhageni (strain Fiocruz L1-130).